The chain runs to 313 residues: tRNA pseudouridine synthase B (313 aa).

Residue D48 is the Nucleophile of the active site.

This sequence belongs to the pseudouridine synthase TruB family. Type 1 subfamily.

It catalyses the reaction uridine(55) in tRNA = pseudouridine(55) in tRNA. Functionally, responsible for synthesis of pseudouridine from uracil-55 in the psi GC loop of transfer RNAs. The sequence is that of tRNA pseudouridine synthase B from Saccharophagus degradans (strain 2-40 / ATCC 43961 / DSM 17024).